Consider the following 148-residue polypeptide: Large ribosomal subunit protein uL13 (148 aa).

It belongs to the universal ribosomal protein uL13 family. As to quaternary structure, part of the 50S ribosomal subunit.

In terms of biological role, this protein is one of the early assembly proteins of the 50S ribosomal subunit, although it is not seen to bind rRNA by itself. It is important during the early stages of 50S assembly. The polypeptide is Large ribosomal subunit protein uL13 (Ureaplasma urealyticum serovar 10 (strain ATCC 33699 / Western)).